The primary structure comprises 519 residues: NAD-dependent histone deacetylase SIR2 (519 aa).

The disordered stretch occupies residues 154–212 (EIDENDNKNDGTNNSDIDSDIDSNSDMDSQSESGELDDAMDVDDSLSENEDEYDQDMST). Over residues 187–208 (GELDDAMDVDDSLSENEDEYDQ) the composition is skewed to acidic residues. The Deacetylase sirtuin-type domain occupies 221–486 (MTPFKYKLPD…SYLCKCLKWD (266 aa)). Residues 246–265 (GAGI…KGLY) and 328–331 (QNID) each bind NAD(+). Histidine 348 functions as the Proton acceptor in the catalytic mechanism. Zn(2+) is bound by residues cysteine 356, cysteine 359, cysteine 380, and cysteine 383. NAD(+)-binding positions include 430-432 (GTS), 455-457 (NKD), and cysteine 472.

This sequence belongs to the sirtuin family. Class I subfamily. In terms of assembly, interacts with HXK1. It depends on Zn(2+) as a cofactor.

Its subcellular location is the nucleus. The catalysed reaction is N(6)-acetyl-L-lysyl-[protein] + NAD(+) + H2O = 2''-O-acetyl-ADP-D-ribose + nicotinamide + L-lysyl-[protein]. In terms of biological role, NAD-dependent deacetylase. Heterochromatin component that silences transcription at silent mating loci, telomeres and the ribosomal DNA, and that also suppresses recombination in the rDNA and extends replicative life span. It acts as a NAD-dependent histone deacetylase, which deacetylates 'Lys-9' and 'Lys-14' of Histone H3 and 'Lys-16' of Histone H4. Functions in the distribution of oxidatively damaged proteins during cell division. Mediates phenotypic switching. The sequence is that of NAD-dependent histone deacetylase SIR2 from Candida albicans (strain SC5314 / ATCC MYA-2876) (Yeast).